The chain runs to 302 residues: Sulfate adenylyltransferase subunit 2 (302 aa).

Residues 280 to 302 (RQGRLIDSDQSASMEQKKRQGYF) form a disordered region.

The protein belongs to the PAPS reductase family. CysD subfamily. In terms of assembly, heterodimer composed of CysD, the smaller subunit, and CysN.

It catalyses the reaction sulfate + ATP + H(+) = adenosine 5'-phosphosulfate + diphosphate. The protein operates within sulfur metabolism; hydrogen sulfide biosynthesis; sulfite from sulfate: step 1/3. Functionally, with CysN forms the ATP sulfurylase (ATPS) that catalyzes the adenylation of sulfate producing adenosine 5'-phosphosulfate (APS) and diphosphate, the first enzymatic step in sulfur assimilation pathway. APS synthesis involves the formation of a high-energy phosphoric-sulfuric acid anhydride bond driven by GTP hydrolysis by CysN coupled to ATP hydrolysis by CysD. The chain is Sulfate adenylyltransferase subunit 2 from Shewanella baltica (strain OS195).